We begin with the raw amino-acid sequence, 211 residues long: Superoxide dismutase [Mn], mitochondrial (211 aa).

The N-terminal 24 residues, 1–24 (MLCRAVCSASRRLAPALGILGVRQ), are a transit peptide targeting the mitochondrion. His-50 contributes to the Mn(2+) binding site. Tyr-58 carries the post-translational modification 3'-nitrotyrosine. N6-acetyllysine; alternate is present on residues Lys-68 and Lys-75. N6-succinyllysine; alternate occurs at positions 68 and 75. His-98 is a binding site for Mn(2+). Lys-114 is subject to N6-acetyllysine. N6-acetyllysine; alternate occurs at positions 122 and 130. An N6-succinyllysine; alternate mark is found at Lys-122 and Lys-130. 2 residues coordinate Mn(2+): Asp-183 and His-187. An N6-acetyllysine modification is found at Lys-202.

This sequence belongs to the iron/manganese superoxide dismutase family. As to quaternary structure, homotetramer. Mn(2+) serves as cofactor. Post-translationally, nitrated under oxidative stress. Nitration coupled with oxidation inhibits the catalytic activity. In terms of processing, acetylation at Lys-122 decreases enzymatic activity. Deacetylated by SIRT3 upon exposure to ionizing radiations or after long fasting. Polyubiquitinated; leading to proteasomal degradation. Deubiquitinated by USP36 which increases protein stability.

The protein resides in the mitochondrion matrix. The enzyme catalyses 2 superoxide + 2 H(+) = H2O2 + O2. Functionally, destroys superoxide anion radicals which are normally produced within the cells and which are toxic to biological systems. The chain is Superoxide dismutase [Mn], mitochondrial (SOD2) from Cavia porcellus (Guinea pig).